Here is a 128-residue protein sequence, read N- to C-terminus: Small ribosomal subunit protein uS9 (128 aa).

A disordered region spans residues 106-128 (SRKVERKKPGRPKARKKFQFSKR). Positions 109-128 (VERKKPGRPKARKKFQFSKR) are enriched in basic residues.

This sequence belongs to the universal ribosomal protein uS9 family.

The polypeptide is Small ribosomal subunit protein uS9 (Azobacteroides pseudotrichonymphae genomovar. CFP2).